The chain runs to 416 residues: Argininosuccinate synthase (416 aa).

Residues 19–27 (AYSGGLDTS) and Ala46 each bind ATP. Residues Tyr97 and Ser102 each coordinate L-citrulline. ATP is bound at residue Gly127. L-aspartate-binding residues include Thr129, Asn133, and Asp134. An L-citrulline-binding site is contributed by Asn133. Residues Arg137, Ser188, Ser197, Glu273, and Tyr285 each coordinate L-citrulline.

This sequence belongs to the argininosuccinate synthase family. Type 1 subfamily. In terms of assembly, homotetramer.

Its subcellular location is the cytoplasm. It carries out the reaction L-citrulline + L-aspartate + ATP = 2-(N(omega)-L-arginino)succinate + AMP + diphosphate + H(+). It participates in amino-acid biosynthesis; L-arginine biosynthesis; L-arginine from L-ornithine and carbamoyl phosphate: step 2/3. The polypeptide is Argininosuccinate synthase (Granulibacter bethesdensis (strain ATCC BAA-1260 / CGDNIH1)).